Reading from the N-terminus, the 287-residue chain is Bifunctional protein FolD (287 aa).

NADP(+) is bound by residues 166–168 (GAS) and Ile232.

This sequence belongs to the tetrahydrofolate dehydrogenase/cyclohydrolase family. In terms of assembly, homodimer.

It catalyses the reaction (6R)-5,10-methylene-5,6,7,8-tetrahydrofolate + NADP(+) = (6R)-5,10-methenyltetrahydrofolate + NADPH. It carries out the reaction (6R)-5,10-methenyltetrahydrofolate + H2O = (6R)-10-formyltetrahydrofolate + H(+). The protein operates within one-carbon metabolism; tetrahydrofolate interconversion. Functionally, catalyzes the oxidation of 5,10-methylenetetrahydrofolate to 5,10-methenyltetrahydrofolate and then the hydrolysis of 5,10-methenyltetrahydrofolate to 10-formyltetrahydrofolate. In Aeromonas salmonicida (strain A449), this protein is Bifunctional protein FolD.